The following is a 273-amino-acid chain: Dermonecrotic toxin LarSicTox-alphaIB1b (273 aa).

His5 is an active-site residue. Residues Glu25 and Asp27 each coordinate Mg(2+). The active-site Nucleophile is the His41. 2 disulfides stabilise this stretch: Cys45–Cys51 and Cys47–Cys190. Position 85 (Asp85) interacts with Mg(2+). An N-linked (GlcNAc...) asparagine glycan is attached at Asn250.

This sequence belongs to the arthropod phospholipase D family. Class II subfamily. Mg(2+) serves as cofactor. As to expression, expressed by the venom gland.

The protein resides in the secreted. The catalysed reaction is an N-(acyl)-sphingosylphosphocholine = an N-(acyl)-sphingosyl-1,3-cyclic phosphate + choline. It carries out the reaction an N-(acyl)-sphingosylphosphoethanolamine = an N-(acyl)-sphingosyl-1,3-cyclic phosphate + ethanolamine. It catalyses the reaction a 1-acyl-sn-glycero-3-phosphocholine = a 1-acyl-sn-glycero-2,3-cyclic phosphate + choline. The enzyme catalyses a 1-acyl-sn-glycero-3-phosphoethanolamine = a 1-acyl-sn-glycero-2,3-cyclic phosphate + ethanolamine. Dermonecrotic toxins cleave the phosphodiester linkage between the phosphate and headgroup of certain phospholipids (sphingolipid and lysolipid substrates), forming an alcohol (often choline) and a cyclic phosphate. This toxin acts on sphingomyelin (SM). It may also act on ceramide phosphoethanolamine (CPE), lysophosphatidylcholine (LPC) and lysophosphatidylethanolamine (LPE), but not on lysophosphatidylserine (LPS), and lysophosphatidylglycerol (LPG). It acts by transphosphatidylation, releasing exclusively cyclic phosphate products as second products. Induces dermonecrosis, hemolysis, increased vascular permeability, edema, inflammatory response, and platelet aggregation. The sequence is that of Dermonecrotic toxin LarSicTox-alphaIB1b from Loxosceles arizonica (Arizona brown spider).